The following is a 325-amino-acid chain: Dehydrogenase/reductase SDR family member 7B (325 aa).

The Cytoplasmic portion of the chain corresponds to 1-17; it reads MVSAATRKSLLRARVMD. Residues 18–38 traverse the membrane as a helical; Signal-anchor for type II membrane protein segment; sequence FITSTAILPLLLGCVGLFSLF. The Lumenal portion of the chain corresponds to 39-325; that stretch reads KLLQWLRMRA…ARKERKSKHS (287 aa). Positions 62 and 64 each coordinate NAD(+). S194 lines the substrate pocket. 3 residues coordinate NAD(+): Y207, K211, and T242. Y207 acts as the Proton acceptor in catalysis.

The protein belongs to the short-chain dehydrogenases/reductases (SDR) family.

It is found in the endoplasmic reticulum membrane. Putative oxidoreductase. The chain is Dehydrogenase/reductase SDR family member 7B (DHRS7B) from Bos taurus (Bovine).